A 674-amino-acid chain; its full sequence is Fidgetin-like protein 1 (674 aa).

A disordered region spans residues 157–179 (SQESDSLPNSAHDRDRTQDFPES). Over residues 167–179 (AHDRDRTQDFPES) the composition is skewed to basic and acidic residues. Lys225 participates in a covalent cross-link: Glycyl lysine isopeptide (Lys-Gly) (interchain with G-Cter in SUMO2). Residue Ser259 is modified to Phosphoserine. The necessary and sufficient for interaction with RAD51 stretch occupies residues 295–344 (FKTAKEQLWVDQQKKYHQPQRASGSSYGGVKKSLGASRSRGILGKFVPPI). Lys339 bears the N6-acetyllysine mark. Residues Ala404 and 444 to 449 (GTGKTL) contribute to the ATP site.

It belongs to the AAA ATPase family. Hexamer. Interacts (via N-terminal one-half region) with RAD51; the interaction is direct. Interacts (via N-terminal one-half region) with SPIDR (via the C-terminal region); the interaction is direct. Interacts with FIRRM; may regulate homologous recombination. It depends on Mg(2+) as a cofactor.

The protein localises to the nucleus. Its subcellular location is the cytoplasm. It localises to the perinuclear region. It carries out the reaction ATP + H2O = ADP + phosphate + H(+). Involved in DNA double-strand break (DBS) repair via homologous recombination (HR). Recruited at DSB sites independently of BRCA2, RAD51 and RAD51 paralogs in a H2AX-dependent manner. May regulate osteoblast proliferation and differentiation. May play a role in the control of male meiosis dynamic. This Homo sapiens (Human) protein is Fidgetin-like protein 1 (FIGNL1).